The sequence spans 229 residues: Putative N-acetylmannosamine-6-phosphate 2-epimerase (229 aa).

This sequence belongs to the NanE family.

It carries out the reaction an N-acyl-D-glucosamine 6-phosphate = an N-acyl-D-mannosamine 6-phosphate. It participates in amino-sugar metabolism; N-acetylneuraminate degradation; D-fructose 6-phosphate from N-acetylneuraminate: step 3/5. Functionally, converts N-acetylmannosamine-6-phosphate (ManNAc-6-P) to N-acetylglucosamine-6-phosphate (GlcNAc-6-P). The polypeptide is Putative N-acetylmannosamine-6-phosphate 2-epimerase (Escherichia coli O139:H28 (strain E24377A / ETEC)).